We begin with the raw amino-acid sequence, 466 residues long: Adenosylhomocysteinase (466 aa).

Positions 57, 132, and 192 each coordinate substrate. 193-195 (TTT) is a binding site for NAD(+). Substrate-binding residues include K222 and D226. Residues N227, 256–261 (GYGDVG), E279, N314, 335–337 (IGH), and N380 contribute to the NAD(+) site.

Belongs to the adenosylhomocysteinase family. The cofactor is NAD(+).

It is found in the cytoplasm. It carries out the reaction S-adenosyl-L-homocysteine + H2O = L-homocysteine + adenosine. It participates in amino-acid biosynthesis; L-homocysteine biosynthesis; L-homocysteine from S-adenosyl-L-homocysteine: step 1/1. Its function is as follows. May play a key role in the regulation of the intracellular concentration of adenosylhomocysteine. The chain is Adenosylhomocysteinase from Chromobacterium violaceum (strain ATCC 12472 / DSM 30191 / JCM 1249 / CCUG 213 / NBRC 12614 / NCIMB 9131 / NCTC 9757 / MK).